The primary structure comprises 574 residues: Multidrug and toxin extrusion protein 1 (574 aa).

Over 1–51 (MEGQAAETNHRAETVVRAELCLSAEQGPETTAYSQKRCLFLPMEVWQEAQQ) the chain is Cytoplasmic. Residues 52–72 (LLALAAPAFLSQLMIFLISIV) traverse the membrane as a helical segment. Over 73 to 86 (SSIFCGHLGKVELD) the chain is Extracellular. The chain crosses the membrane as a helical span at residues 87 to 107 (AVSLAITIINITGVAVGTGLA). The Cytoplasmic segment spans residues 108–133 (GACDTLISQTFGGSNLKLVGIILQRG). The helical transmembrane segment at 134-154 (ILILLLFCFPCWALLINTESI) threads the bilayer. Residues 155-168 (LLLFRQDPEVSKLT) are Extracellular-facing. A helical transmembrane segment spans residues 169-189 (QIYVLIFLPALPAAFLYQLLA). Residues 190-204 (KYLQNQGIIYPQVLT) lie on the Cytoplasmic side of the membrane. The helical transmembrane segment at 205–225 (GFIANIFNALFNYILLYVLGL) threads the bilayer. Over 226–230 (GVMGS) the chain is Extracellular. The chain crosses the membrane as a helical span at residues 231 to 251 (ACANTVSQFIQMILLFLYIVW). Residues 252–271 (RRLYADTWGGWSQACFEEWG) lie on the Cytoplasmic side of the membrane. The chain crosses the membrane as a helical span at residues 272 to 291 (AFIRLAVASMLMLCIEWWAF). The Extracellular segment spans residues 292–309 (EISMFLAGVLGMVDLAAQ). Residues 310 to 330 (AIIYQVAIVVYLIPLGLCIAG) form a helical membrane-spanning segment. The Cytoplasmic segment spans residues 331-350 (SIRVGHGLGAGNTEQAKRSA). Residues 351–371 (LVVLCMTELCALLSGILLATL) traverse the membrane as a helical segment. Over 372-384 (KDVVAYIFTSDPN) the chain is Extracellular. The helical transmembrane segment at 385–405 (IVALVSYVLPVYSACLLFDAC) threads the bilayer. Over 406–430 (VAACGGILRGSGKLKVGAISHTVGY) the chain is Cytoplasmic. The helical transmembrane segment at 431–451 (YVIGLPLGISLMFAAKLGIIG) threads the bilayer. The Extracellular segment spans residues 452–453 (FW). The chain crosses the membrane as a helical span at residues 454–472 (FGILACGIAQSIFLIIFVF). Over 473–549 (KIDWKRASEE…AGAAQHTRTL (77 aa)) the chain is Cytoplasmic. The interval 500–541 (KPSVYQEGCPTEQGDVDPGNVESIEFSQSSTSSEGTSPTPAG) is disordered. Residues 521–538 (ESIEFSQSSTSSEGTSPT) show a composition bias toward low complexity. Residues 550-570 (ILTRGLALGCAVGTLIIGIVI) form a helical membrane-spanning segment. The Extracellular segment spans residues 571–574 (RLSV).

The protein belongs to the multi antimicrobial extrusion (MATE) (TC 2.A.66.1) family.

The protein resides in the cell membrane. It localises to the apical cell membrane. The enzyme catalyses thiamine(out) + H(+)(in) = thiamine(in) + H(+)(out). It carries out the reaction estrone 3-sulfate(in) + H(+)(out) = estrone 3-sulfate(out) + H(+)(in). The catalysed reaction is creatinine(in) + H(+)(out) = creatinine(out) + H(+)(in). It catalyses the reaction agmatine(in) + H(+)(out) = agmatine(out) + H(+)(in). In terms of biological role, multidrug efflux pump that functions as a H(+)/organic cation antiporter. Mediates the secretion of cationic compounds including drugs, toxins and endogenous metabolites. Plays a role physiological role in the excretion of drugs, toxins and endogenous metabolites through the kidney and liver, into urine and bile respectively. The polypeptide is Multidrug and toxin extrusion protein 1 (slc47a1) (Xenopus tropicalis (Western clawed frog)).